The following is a 662-amino-acid chain: Leucine aminopeptidase 2 (662 aa).

A peptide is bound by residues 178–180 (QLE) and 304–309 (PYGGME). A Zn(2+)-binding site is contributed by His-333. Glu-334 serves as the catalytic Proton acceptor. 2 residues coordinate Zn(2+): His-337 and Glu-356. Tyr-422 serves as the catalytic Proton donor.

It belongs to the peptidase M1 family. The cofactor is Zn(2+).

It localises to the cytoplasm. The protein localises to the nucleus. It catalyses the reaction an epoxide + H2O = an ethanediol. In terms of biological role, aminopeptidase that preferentially cleaves di- and tripeptides. Also has low epoxide hydrolase activity (in vitro). Can hydrolyze the epoxide leukotriene LTA(4) but it forms preferentially 5,6-dihydroxy-7,9,11,14-eicosatetraenoic acid rather than the cytokine leukotriene B(4) as the product compared to the homologous mammalian enzyme (in vitro). The sequence is that of Leucine aminopeptidase 2 from Kluyveromyces lactis (strain ATCC 8585 / CBS 2359 / DSM 70799 / NBRC 1267 / NRRL Y-1140 / WM37) (Yeast).